Consider the following 487-residue polypeptide: MKPSTEWWRYLAPLAVIAIIALLPVPAGLENHTWLYFAVFTGVIVGLILEPVPGAVVAMVGISIIAILSPWLLFSPEQLAQPGFKFTAKSLSWAVSGFSNSVIWLIFAAFMFGTGYEKTGLGRRIALILVKKMGHRTLFLGYAVMFSELILAPVTPSNSARGAGIIYPIIRNLPPLYQSQPNDSSSRSIGSYIMWMGIVADCVTSAIFLTAMAPNLLLIGLMKSASHATLSWGDWFLGMLPLSILLVLLVPWLAYVLYPPVLKSGDQVPRWAETELQAMGPLCSREKRMLGLMVGALVLWIFGGDYIDAAMVGYSVVALMLLLRIISWDDIVSNKAAWNVFFWLASLITLATGLNNTGFISWFGKLLAGSLSGYSPTMVMVALIVVFYLLRYFFASATAYTSALAPMMIAAALAMPEIPLPVFCLMVGAAIGLGSILTPYATGPSPIYYGSGYLPTADYWRLGAIFGLIFLVLLVITGLLWMPVVLL.

The Periplasmic segment spans residues 1–9; it reads MKPSTEWWR. Residues 10–30 form a helical membrane-spanning segment; it reads YLAPLAVIAIIALLPVPAGLE. Topologically, residues 31-32 are cytoplasmic; sequence NH. 2 helical membrane-spanning segments follow: residues 33-53 and 54-74; these read TWLY…EPVP and GAVV…WLLF. Topologically, residues 75 to 92 are cytoplasmic; the sequence is SPEQLAQPGFKFTAKSLS. The helical transmembrane segment at 93-113 threads the bilayer; that stretch reads WAVSGFSNSVIWLIFAAFMFG. The Periplasmic portion of the chain corresponds to 114–136; it reads TGYEKTGLGRRIALILVKKMGHR. The chain crosses the membrane as a helical span at residues 137 to 157; sequence TLFLGYAVMFSELILAPVTPS. Residues 158-188 are Cytoplasmic-facing; it reads NSARGAGIIYPIIRNLPPLYQSQPNDSSSRS. The chain crosses the membrane as a helical span at residues 189 to 209; the sequence is IGSYIMWMGIVADCVTSAIFL. The Periplasmic portion of the chain corresponds to 210–235; that stretch reads TAMAPNLLLIGLMKSASHATLSWGDW. Residues 236–256 traverse the membrane as a helical segment; that stretch reads FLGMLPLSILLVLLVPWLAYV. Residues 257 to 291 lie on the Cytoplasmic side of the membrane; sequence LYPPVLKSGDQVPRWAETELQAMGPLCSREKRMLG. Transmembrane regions (helical) follow at residues 292 to 312 and 313 to 333; these read LMVG…AAMV and GYSV…DIVS. Residues 334 to 339 lie on the Cytoplasmic side of the membrane; sequence NKAAWN. A helical membrane pass occupies residues 340–360; the sequence is VFFWLASLITLATGLNNTGFI. Residues 361 to 369 are Periplasmic-facing; that stretch reads SWFGKLLAG. A helical membrane pass occupies residues 370-390; that stretch reads SLSGYSPTMVMVALIVVFYLL. Over 391 to 392 the chain is Cytoplasmic; it reads RY. A helical membrane pass occupies residues 393 to 413; the sequence is FFASATAYTSALAPMMIAAAL. Topologically, residues 414–417 are periplasmic; it reads AMPE. A helical membrane pass occupies residues 418–438; it reads IPLPVFCLMVGAAIGLGSILT. Residues 439–464 lie on the Cytoplasmic side of the membrane; the sequence is PYATGPSPIYYGSGYLPTADYWRLGA. A helical membrane pass occupies residues 465 to 485; sequence IFGLIFLVLLVITGLLWMPVV. Residues 486 to 487 lie on the Periplasmic side of the membrane; that stretch reads LL.

Belongs to the SLC13A/DASS transporter (TC 2.A.47) family. DIT1 subfamily.

The protein resides in the cell inner membrane. It carries out the reaction (2R,3R)-tartrate(out) + succinate(in) = (2R,3R)-tartrate(in) + succinate(out). In terms of biological role, catalyzes the uptake of tartrate in exchange for intracellular succinate. Essential for anaerobic L-tartrate fermentation. The protein is L-tartrate/succinate antiporter of Escherichia coli (strain K12).